The following is a 1664-amino-acid chain: MESTDSSDSSGDSLKSIPRPDFEALSAIGSPQPQLQSSSLDGHVEMEPVIMPSKRQKYIVSAPPGSANCSSNSSSSSPSNINVGSSLTMKLTKVQPQQHQAKSSTPNNKGKVAKEMVALQRSHIESEVLSNFVTGVSKLKSRKSRYVPGNLATQAVGGELSRSLNTSSENENKSLKVALKRSSSIPAPILDSDDDWQDEDIAWGVTTCRPRGRSMAFEDGERLANLNAEDRNIVPAYSMATRCRSRSKTLSLSNSWSNDDKGPRRSNLRSENEEFAKKHNAFLDRIIHDDRESELALNTSGEGESSLFSDASDTKTTTAKTPEEEAAERLALIYEEPPTPGWDPFCWKCRGCGKLMPCSKCLRSFHSYCVRPATTKFDSSWKCPECQVIEAAPKRLRRNGVSVDLLSQLLSFALDRMKHVRGAHKLRSPLEVFPLTYKKFFVNPVSFESLAQCIRNGAYQSTDEFLSEVKWIQHNALILDAGDAKVEQASKAVVKVCRQEANEIDTCPECYLNANSSDEWFVKVCRHPHLLLWAKLKGFPYWPAKAMGSSNSTLVNVRFFGKHDRAFVPVKDCFLYSAQNPNTQTSRRSARDLAECIREVEIHIDHIKRKIGAFNYAPYRTPYDPLEEQQQLEQMMPGVYAAIDRELEPANKTPLQFLIRKTADDKLSIVKKTKATESGNESDQSPSPTKKLSEVDVVSVTGSGCSDHSNVKSNNYEVISRSGESLTDSRCKVLLKRKSLAAKIVAESVETSEAVAPKRKHSLSDASFTSESSEHKRKSKHARKQHDNQDNQIEEAEKTGQEPPKSPTISKQNENLRDEENVIENAANDTSSASPVSASVVSVVELVRRRQGVTITKIPREQQQTAEDTAAVPIPLPTAPPPKQNIPKGNEAANPKQSDVERQQEQLIKKVIPFIEIKTEVMSEPDDEGIEEASPANQPQTDQVPLQQETITAQPESQMPAAAPAPQPKPVDNAPFEEVRIKEEILSEDEMETEQSIVSRRLKSVPPMPLPMPPPPPLPPREESPATADSVRFVGDTTIQRVSQKQGGKSTDTGGKRKGVQQVPIAGIPQAPSPTHSPLLSTAPSPSASPKPTSTLAVSKPPPPPPPKGKSASHLQFRGKNDRIPTSPPATAPPATNTSSLLRSNMVVIPVEQGGSCNAHSPMTIPVPPLRAVSKNTLQNTSTGSTSSCVPSSVSMPPPLAGLSIPPVATPTSQEESITNSGQPVGLLASALNGTANDVLSSDSIPNDPITPGLATALSEMLLHTGVPKLIARPRGALRSDGSQIYPSQAGPVSQKLKENAHKITDYFISVIEDTLSDMATGDQSVLQARIAGLSLENERLKQHYDRQINDLHRTSELMISEMRKTLEQEHKRVISELRQQNAIELMRAVEEAKRKQWCANCMREAQLYCCWNTSYCDYPCQQLHWPGHSATCGQSVPPTIPVPPSVPTPIIEPGRAKAKVATPTATPSITNPSPSSQIMRTVAACPSAPPSANASSSKKWPPMMTLMNQSNQEAMLKLPATTYLRPVVSTTMTAPVTAPQPANNNSTNVIMAPTPPPGNNLATIISAQRNPPNYNAKHPNPAMPVQRFNIPLPITVNSNAPFMMAEQHQKQVPKATGRSGKNNSRMRQTYSNNINNSNPQGMRCNNNPQAIRQNQMNQQVFQP.

Low complexity-rich tracts occupy residues 1 to 16 (MEST…SLKS), 30 to 40 (SPQPQLQSSSL), and 61 to 84 (SAPP…INVG). 3 disordered regions span residues 1–84 (MEST…INVG), 251–271 (SLSN…LRSE), and 295–323 (LALN…KTPE). Over residues 258–271 (NDDKGPRRSNLRSE) the composition is skewed to basic and acidic residues. Over residues 296–308 (ALNTSGEGESSLF) the composition is skewed to polar residues. Over residues 309-320 (SDASDTKTTTAK) the composition is skewed to low complexity. A PHD-type zinc finger spans residues 343-389 (DPFCWKCRGCGKLMPCSKCLRSFHSYCVRPATTKFDSSWKCPECQVI). The Zn(2+) site is built by cysteine 346, cysteine 349, cysteine 358, cysteine 361, histidine 366, cysteine 369, cysteine 383, and cysteine 386. In terms of domain architecture, Bromo spans 401-504 (VSVDLLSQLL…KVCRQEANEI (104 aa)). Cysteine 507, cysteine 510, and cysteine 525 together coordinate Zn(2+). One can recognise a PWWP domain in the interval 528 to 579 (PHLLLWAKLKGFPYWPAKAMGSSNSTLVNVRFFGKHDRAFVPVKDCFLYSAQ). 4 disordered regions span residues 672 to 693 (KTKA…KKLS), 747 to 815 (ESVE…QNEN), 857 to 905 (KIPR…RQQE), and 919 to 1139 (TEVM…TNTS). A compositionally biased stretch (polar residues) spans 676 to 690 (TESGNESDQSPSPTK). The segment covering 775–784 (HKRKSKHARK) has biased composition (basic residues). The span at 785–800 (QHDNQDNQIEEAEKTG) shows a compositional bias: basic and acidic residues. Positions 874-884 (IPLPTAPPPKQ) are enriched in pro residues. Residues 935–952 (PANQPQTDQVPLQQETIT) show a composition bias toward polar residues. Low complexity predominate over residues 953–962 (AQPESQMPAA). Residues 1006–1019 (PPMPLPMPPPPPLP) show a composition bias toward pro residues. The span at 1037–1053 (TTIQRVSQKQGGKSTDT) shows a compositional bias: polar residues. Positions 1073–1097 (SPTHSPLLSTAPSPSASPKPTSTLA) are enriched in low complexity. Zn(2+) is bound by residues cysteine 1399, cysteine 1402, cysteine 1410, cysteine 1411, cysteine 1417, cysteine 1421, histidine 1429, and cysteine 1433. The MYND-type zinc-finger motif lies at 1399–1433 (CANCMREAQLYCCWNTSYCDYPCQQLHWPGHSATC). Residues 1613–1648 (VPKATGRSGKNNSRMRQTYSNNINNSNPQGMRCNNN) are disordered. The segment covering 1620-1648 (SGKNNSRMRQTYSNNINNSNPQGMRCNNN) has biased composition (polar residues).

The protein resides in the nucleus. It localises to the chromosome. Its function is as follows. Chromatin reader that recognizes specific histone signatures to regulate transcription. Plays a role in neuronal development. This Drosophila melanogaster (Fruit fly) protein is MYND-type zinc finger-containing chromatin reader Zmynd8.